Here is a 150-residue protein sequence, read N- to C-terminus: Large ribosomal subunit protein uL15 (150 aa).

Positions 1–52 (MDLSNLKPAEGSVRKNSKRIGRGEGSGKGGTATRGHKGAKSRSGYSKKIGFE) are disordered. Positions 23–32 (GEGSGKGGTA) are enriched in gly residues.

This sequence belongs to the universal ribosomal protein uL15 family. As to quaternary structure, part of the 50S ribosomal subunit.

Binds to the 23S rRNA. The protein is Large ribosomal subunit protein uL15 of Christiangramia forsetii (strain DSM 17595 / CGMCC 1.15422 / KT0803) (Gramella forsetii).